Reading from the N-terminus, the 413-residue chain is MATPVRDETRNVIDDNISARIQSKVKTNDTVRQTPSSLRKVSIKDEQVKQYQRNLNRFKTILNGLKAEEEKLSETDDIQMLAEKLLKLGETIDKVENRIVDLVEKIQLLETNENNNILHEHIDATGTYYLFDTLTSTNKRFYPKDCVFDYRTNNVENIPILLNNFKKFIKKYQFDDVFENDIIEIDPRENEILCKIIKEGLGESLDIMNTNTTDIFRIIDGLKNKYRSLHGRDVRIRAWEKVLVDTTCRNSALLMNKLQKLVLMEKWIFSKCCQDCPNLKDYLQEAIMGTLHESLRNSVKQRLYNIPHNVGINHEEFLINTVIETVIDLSPIADDQIENSCMYCKSVFHCSINCKKKPNRELRPDSTNFSKTYYLQGAQRQQQLKSSAKRTKVLEQDTKKVKQSVQQQKTGNY.

Residues 39–115 (RKVSIKDEQV…IQLLETNENN (77 aa)) adopt a coiled-coil conformation. A disordered region spans residues 380–413 (RQQQLKSSAKRTKVLEQDTKKVKQSVQQQKTGNY). The span at 403–413 (QSVQQQKTGNY) shows a compositional bias: low complexity.

In terms of biological role, capsid protein (CA) is the structural component of the virus-like particle (VLP), forming the shell that encapsulates the retrotransposons dimeric RNA genome. This is Transposon Ty4-H Gag polyprotein (TY4A-H) from Saccharomyces cerevisiae (strain ATCC 204508 / S288c) (Baker's yeast).